Reading from the N-terminus, the 61-residue chain is Rubredoxin 3 (61 aa).

Residues 1 to 53 form the Rubredoxin-like domain; that stretch reads MSSYRCPVCEYVYDESKGAPREGFPAGTPWDAVPDDWCCPDCGVREKLDFEPM. 4 residues coordinate Fe cation: Cys-6, Cys-9, Cys-39, and Cys-42.

This sequence belongs to the rubredoxin family. Fe(3+) serves as cofactor.

Its function is as follows. Involved in the hydrocarbon hydroxylating system, which transfers electrons from NADH to rubredoxin reductase and then through rubredoxin to alkane 1 monooxygenase. The polypeptide is Rubredoxin 3 (rubA3) (Rhodococcus erythropolis (Arthrobacter picolinophilus)).